Here is a 402-residue protein sequence, read N- to C-terminus: GPI mannosyltransferase 1 (402 aa).

Helical transmembrane passes span 5–25 (VILL…YGIF), 79–99 (WIHM…VMII), 108–128 (LTKQ…ITIS), 162–182 (LSIH…IYLL), 191–211 (IWRL…PTYF), 238–258 (FSIW…SQSI), 260–280 (LSKL…YLLW), 309–329 (QYFI…TITW), 333–353 (VVCI…AYLL), and 365–385 (LFFG…VFIT).

This sequence belongs to the PIGM family.

It localises to the endoplasmic reticulum membrane. The protein operates within glycolipid biosynthesis; glycosylphosphatidylinositol-anchor biosynthesis. Its function is as follows. Mannosyltransferase involved in glycosylphosphatidylinositol-anchor biosynthesis. Transfers the first alpha-1,4-mannose to GlcN-acyl-PI during GPI precursor assembly. Required for cell wall integrity. The chain is GPI mannosyltransferase 1 (GPI14) from Kluyveromyces lactis (strain ATCC 8585 / CBS 2359 / DSM 70799 / NBRC 1267 / NRRL Y-1140 / WM37) (Yeast).